Here is a 321-residue protein sequence, read N- to C-terminus: uncharacterized protein (321 aa).

Helical transmembrane passes span 12–32 (IGVE…WAAT), 52–72 (LITS…AFLV), 86–106 (ILMS…ILII), 109–129 (LTGL…QQWF), 136–156 (FVIS…LVLA), 168–188 (DSLS…LFVG), 214–234 (WGMI…FTFL), 254–274 (KEIP…GLFF), and 292–312 (IFIC…QIFA).

The protein resides in the cell membrane. This is an uncharacterized protein from Campylobacter jejuni subsp. jejuni serotype O:2 (strain ATCC 700819 / NCTC 11168).